We begin with the raw amino-acid sequence, 453 residues long: Bifunctional protein GlmU (453 aa).

A pyrophosphorylase region spans residues 1 to 227; it reads MAVSVIILAA…SIEVMGVNDR (227 aa). Residues 8-11, Lys-22, Gln-73, 78-79, 100-102, Gly-137, Glu-152, Asn-167, and Asn-225 contribute to the UDP-N-acetyl-alpha-D-glucosamine site; these read LAAG, GT, and SGD. Asp-102 provides a ligand contact to Mg(2+). Asn-225 contributes to the Mg(2+) binding site. Positions 228–248 are linker; sequence QQLAYLERFYQKREAARLMGE. The N-acetyltransferase stretch occupies residues 249 to 453; it reads GVSLSDPDRF…WPGWKRPSKK (205 aa). Residues Arg-331 and Lys-349 each coordinate UDP-N-acetyl-alpha-D-glucosamine. His-361 functions as the Proton acceptor in the catalytic mechanism. UDP-N-acetyl-alpha-D-glucosamine-binding residues include Tyr-364 and Asn-375. Acetyl-CoA-binding positions include Ala-378, 384–385, Ser-403, Ala-421, and Arg-438; that span reads NY. A disordered region spans residues 430-453; it reads PPGELTLSRTPQKSWPGWKRPSKK.

It in the N-terminal section; belongs to the N-acetylglucosamine-1-phosphate uridyltransferase family. The protein in the C-terminal section; belongs to the transferase hexapeptide repeat family. As to quaternary structure, homotrimer. It depends on Mg(2+) as a cofactor.

Its subcellular location is the cytoplasm. The enzyme catalyses alpha-D-glucosamine 1-phosphate + acetyl-CoA = N-acetyl-alpha-D-glucosamine 1-phosphate + CoA + H(+). The catalysed reaction is N-acetyl-alpha-D-glucosamine 1-phosphate + UTP + H(+) = UDP-N-acetyl-alpha-D-glucosamine + diphosphate. It functions in the pathway nucleotide-sugar biosynthesis; UDP-N-acetyl-alpha-D-glucosamine biosynthesis; N-acetyl-alpha-D-glucosamine 1-phosphate from alpha-D-glucosamine 6-phosphate (route II): step 2/2. It participates in nucleotide-sugar biosynthesis; UDP-N-acetyl-alpha-D-glucosamine biosynthesis; UDP-N-acetyl-alpha-D-glucosamine from N-acetyl-alpha-D-glucosamine 1-phosphate: step 1/1. Its pathway is bacterial outer membrane biogenesis; LPS lipid A biosynthesis. Functionally, catalyzes the last two sequential reactions in the de novo biosynthetic pathway for UDP-N-acetylglucosamine (UDP-GlcNAc). The C-terminal domain catalyzes the transfer of acetyl group from acetyl coenzyme A to glucosamine-1-phosphate (GlcN-1-P) to produce N-acetylglucosamine-1-phosphate (GlcNAc-1-P), which is converted into UDP-GlcNAc by the transfer of uridine 5-monophosphate (from uridine 5-triphosphate), a reaction catalyzed by the N-terminal domain. This Nitrosococcus oceani (strain ATCC 19707 / BCRC 17464 / JCM 30415 / NCIMB 11848 / C-107) protein is Bifunctional protein GlmU.